The chain runs to 545 residues: Thermosome subunit beta (545 aa).

It belongs to the TCP-1 chaperonin family. Forms a Heterooligomeric complex of two stacked eight-membered rings.

Its function is as follows. Molecular chaperone; binds unfolded polypeptides in vitro, and has a weak ATPase activity. The polypeptide is Thermosome subunit beta (thsB) (Archaeoglobus fulgidus (strain ATCC 49558 / DSM 4304 / JCM 9628 / NBRC 100126 / VC-16)).